Consider the following 252-residue polypeptide: GTP cyclohydrolase 1 type 2 homolog (252 aa).

Residues His63, His64, Asp101, His220, and Glu224 each contribute to the a divalent metal cation site.

Belongs to the GTP cyclohydrolase I type 2/NIF3 family. As to quaternary structure, homohexamer.

This Vibrio cholerae serotype O1 (strain ATCC 39315 / El Tor Inaba N16961) protein is GTP cyclohydrolase 1 type 2 homolog.